The sequence spans 362 residues: Myricetin 3'-O-methyltransferase 4 (362 aa).

Residue Asp-229 participates in S-adenosyl-L-methionine binding. His-267 acts as the Proton acceptor in catalysis.

Belongs to the class I-like SAM-binding methyltransferase superfamily. Cation-independent O-methyltransferase family. In terms of assembly, homodimer. In terms of tissue distribution, mainly expressed in stem and petiole trichomes.

The enzyme catalyses myricetin + S-adenosyl-L-methionine = laricitrin + S-adenosyl-L-homocysteine + H(+). Its pathway is flavonoid metabolism. In terms of biological role, flavonoid 3'-O-methyltransferase involved in the biosynthesis of polymethoxylated flavonoids natural products such as myricetin derivatives, aroma compounds possessing antioxidant properties and exhibiting pharmacological activities such as anti-carcinogen, anti-viral, anti-thrombotic, anti-diabetic, anti-atherosclerotic, and anti-inflammatory effects. Catalyzes S-adenosylmethionine-dependent regioselective 3'-O-methylation of flavonoids; active on various hydroxylated flavonoid substrates, including myricetin, thus producing 3'-methyl myricetin (laricitrin). The chain is Myricetin 3'-O-methyltransferase 4 from Solanum lycopersicum (Tomato).